We begin with the raw amino-acid sequence, 190 residues long: MDIKIDISISGDKFTVTTRRENEERKKYLPLQKEKTTDVIKPDYLEYDDLLDRDEMSTILEEYFMYRGLLGLRIKYGRLFNEIKKFDNDAEEQFGTIEELKQKLRLNSEEGADNFIDYIKVQKQDIVKLTVYDCISMIGLCACVVDVWRNEKLFSRWKYCLRAIKLFINDHMLDKIKSILQNRLVYVEMS.

Belongs to the orthopoxvirus A52R protein family. Interacts with host TRAF6 and IRAK2.

Its function is as follows. Bcl-2-like protein which targets host toll-like receptor signaling complexes to suppress innate immune response. Interacts with host TRAF6 to activate p38 and subsequently induce the expression of several cytokines such as IL-10. Also associates with host IRAK2 to inhibit NF-kappa-B signaling. The sequence is that of Protein A52 from Homo sapiens (Human).